Here is a 279-residue protein sequence, read N- to C-terminus: Pantothenate synthetase (279 aa).

Met-26–His-33 provides a ligand contact to ATP. Catalysis depends on His-33, which acts as the Proton donor. Residue Gln-57 participates in (R)-pantoate binding. Gln-57 is a beta-alanine binding site. Residue Gly-144 to Asp-147 participates in ATP binding. Position 150 (Gln-150) interacts with (R)-pantoate. Leu-181–Arg-184 is an ATP binding site.

Belongs to the pantothenate synthetase family. In terms of assembly, homodimer.

The protein localises to the cytoplasm. The catalysed reaction is (R)-pantoate + beta-alanine + ATP = (R)-pantothenate + AMP + diphosphate + H(+). It functions in the pathway cofactor biosynthesis; (R)-pantothenate biosynthesis; (R)-pantothenate from (R)-pantoate and beta-alanine: step 1/1. Catalyzes the condensation of pantoate with beta-alanine in an ATP-dependent reaction via a pantoyl-adenylate intermediate. The chain is Pantothenate synthetase from Herminiimonas arsenicoxydans.